A 306-amino-acid polypeptide reads, in one-letter code: Palmitoyl-protein thioesterase ABHD10, mitochondrial (306 aa).

The transit peptide at 1–52 (MAVARLAAVAAWVPCRSWGWAAVPFGPHRGLSVLLARIPQRAPRWLPACRQK) directs the protein to the mitochondrion. The 101-residue stretch at 78–178 (IIFIPGYLSY…VVALIGVATA (101 aa)) folds into the AB hydrolase-1 domain. Residues Ser152, Asp249, and His279 each act as charge relay system in the active site.

It belongs to the AB hydrolase superfamily.

The protein localises to the mitochondrion. It carries out the reaction S-hexadecanoyl-L-cysteinyl-[protein] + H2O = L-cysteinyl-[protein] + hexadecanoate + H(+). The catalysed reaction is mycophenolic acid O-acyl-beta-D-glucuronide + H2O = mycophenolate + D-glucuronate + H(+). With respect to regulation, inhibited by palmostatin-B. Its function is as follows. Acts as an acyl-protein thioesterase that hydrolyzes fatty acids from acylated residues in proteins. Regulates the mitochondrial S-depalmitoylation of the nucleophilic active site residue of peroxiredoxin-5/PRDX5, a key antioxidant protein, therefore modulating mitochondrial antioxidant ability. Also catalyzes the deglucuronidation of mycophenolic acid acyl-glucuronide, an active metabolite of the immunosuppressant drug mycophenolate. The polypeptide is Palmitoyl-protein thioesterase ABHD10, mitochondrial (Homo sapiens (Human)).